The sequence spans 66 residues: Large ribosomal subunit protein bL35 (66 aa).

It belongs to the bacterial ribosomal protein bL35 family.

The polypeptide is Large ribosomal subunit protein bL35 (Treponema denticola (strain ATCC 35405 / DSM 14222 / CIP 103919 / JCM 8153 / KCTC 15104)).